Consider the following 1439-residue polypeptide: MAKEDIEEEREIRNDASENSSDEEGDDVLDSSEEDDDDDDEEAIKRVREGFIVDDDEDESQKRKRRKHKKRKREERTNDDENNALDQDDLELLMENSGARPQPSSNKLKRLKRAYTEDTEGAEEEEIGAKSGRGGLTDIFSDEDNNEEERADLGETRVDDDRNILDEFEDFIEEDEYSDEDEERQRKLTQQRERAQKKGPRLDTSKLSNVDRESLQQLFEVFGNGAEYEWALEAQEMEDEGNGENLEPTSLDEVFEHAELKERMLTEEDNLIRIVDIPERFQKYRANLNYIDLEGEELKSEQGWVANILFMEKQGSFSGFLEEPFKEAVSKVVEFISKDVYEVPFIWTHRRDFLLYSEEIKNEDGSVTNSVHKLLFEDDLWRIFQLDIEYHSLYEKRVNIEKLIESLNLDDDLVKDVKSLETMVAIQDLQDYINFTYSTEIRKLYDDKETEGIDANITKKHSKYAIFERIKSNVLYDAVNAFGISAKEFGENVQDQSSKKFEVPYRIHATDDHIESPEDLIERLCEDDEVLFKDPKNALNAVRKTFAEEIFHNPKIRHEVRTTFKDFASIRVAVTEKGKAIDNHSPYADIKYAINRSPADLVRNPDVLLRMLEAEAAGLVVVKVETKDYDSWFQCIFNCLKSDGSSEIFEKWNKEREFVLNMAFKRLTSMVSMNTKEDLRRECERLIASEVRRRFLARIDQAPFTPFGFDKGTKPNVLALSFGKGDFDSAVIGAFLRESGKVDEFFKSEDNPIRDRESEDKFSGQLKEFFDKNLRNQKPDVIVVSGYNAISKKLFDSVKSFVETNNVTANTEELTDVQNPPLIQVIWGQSETATLFQNSERARIEFSDKPTLAKYCVGLARYVQSPLLEYLSLGEGILSLTFFEHQKLISTDLVMEAIESAYVDIINMVGVEINEAIRDPYIAQLLPYVAGLGPRKASGLLRNINSKLGSTLANRSDLIENELSTANIFINCSSFLNIPYDEGLSMRDSSVELLDATRIHPEDYDLARKMAADALDLDEEDMAHVEEQGGIIYQLMQDGVNKVDDLNLTAYGKELESKFGKKKYATLQSIKEELVNNFEEIRRSFHILESHEVFHMLTGETTESFTRNTIVPVTVNKVGQNFRDFENSKIKFAKVTTSSFIQGNIEEASIPQGIDLAQGQVVQAVVLDAYYDSFTASFSLLEADIQKGAAPKFHKDPLKWNFEAEQADKQKEMAKERAQLAKTRNIQHPLFHNFSYKQAEEFLAPQAVGDCVLRPSSKGPNYLTVTWKVSNNLFQHLSIQENTQGMGKEYIVEHKKYADLDQLIFQHVQAIAKHVDEMCRHPKFREGTMSEVNEWLESYTKANPKNSAYVFCFDHKAPGWFLLLFKVNVNTPITTWHVKTECDGYRLKGFSYPSMLRLCNGFKQTFKSYVKGIADRSRSTKPAPVNNQAQASTYGGYGY.

Residues 1–16 (MAKEDIEEEREIRNDA) show a composition bias toward basic and acidic residues. Residues 1–206 (MAKEDIEEER…KKGPRLDTSK (206 aa)) are disordered. A compositionally biased stretch (acidic residues) spans 20–42 (SSDEEGDDVLDSSEEDDDDDDEE). Residues 62–73 (KRKRRKHKKRKR) are compositionally biased toward basic residues. 3 stretches are compositionally biased toward acidic residues: residues 77–92 (TNDD…DLEL), 117–126 (EDTEGAEEEE), and 140–150 (FSDEDNNEEER). Over residues 151–165 (ADLGETRVDDDRNIL) the composition is skewed to basic and acidic residues. The segment covering 166-182 (DEFEDFIEEDEYSDEDE) has biased composition (acidic residues). Residues 183-206 (ERQRKLTQQRERAQKKGPRLDTSK) show a composition bias toward basic and acidic residues. The region spanning 1229 to 1323 (PLFHNFSYKQ…HVDEMCRHPK (95 aa)) is the SH2 domain. Residues 1417-1439 (SRSTKPAPVNNQAQASTYGGYGY) form a disordered region.

The protein belongs to the SPT6 family.

It is found in the nucleus. The protein resides in the chromosome. In terms of biological role, histone H3-H4 chaperone that plays a role in maintenance of chromatin structure during RNA polymerase II transcription elongation thereby repressing transcription initiation from cryptic promoters. Mediates the reassembly of nucleosomes onto the promoters of at least a selected set of genes during repression; the nucleosome reassembly is essential for transcriptional repression. Essential for viability. This Debaryomyces hansenii (strain ATCC 36239 / CBS 767 / BCRC 21394 / JCM 1990 / NBRC 0083 / IGC 2968) (Yeast) protein is Transcription elongation factor SPT6 (SPT6).